A 213-amino-acid chain; its full sequence is Adenylate kinase (213 aa).

An ATP-binding site is contributed by 10-15; that stretch reads GAGKGT. An NMP region spans residues 30 to 59; it reads STGDIFRANIKNNTELGQKAKTYMDKGELV. AMP contacts are provided by residues Thr31, Arg36, 57 to 59, 85 to 88, and Gln92; these read ELV and GFPR. Residues 126–163 form an LID region; it reads GRRACVGCGATYHIQFNPTKVEGICDACGEKLILRDDD. Arg127 contributes to the ATP binding site. Cys130 and Cys133 together coordinate Zn(2+). 136–137 contributes to the ATP binding site; it reads TY. Zn(2+)-binding residues include Cys150 and Cys153. Residues Arg160 and Arg171 each coordinate AMP. Gln199 contributes to the ATP binding site.

The protein belongs to the adenylate kinase family. Monomer.

The protein localises to the cytoplasm. It catalyses the reaction AMP + ATP = 2 ADP. It functions in the pathway purine metabolism; AMP biosynthesis via salvage pathway; AMP from ADP: step 1/1. Its function is as follows. Catalyzes the reversible transfer of the terminal phosphate group between ATP and AMP. Plays an important role in cellular energy homeostasis and in adenine nucleotide metabolism. The sequence is that of Adenylate kinase from Lachnospira eligens (strain ATCC 27750 / DSM 3376 / VPI C15-48 / C15-B4) (Eubacterium eligens).